The primary structure comprises 374 residues: CMP-N-acetylneuraminate-beta-1,4-galactoside alpha-2,3-sialyltransferase (374 aa).

Over 1-8 the chain is Cytoplasmic; it reads MGLLVFVR. The chain crosses the membrane as a helical; Signal-anchor for type II membrane protein span at residues 9–28; sequence NLLLALCLFLVLGFLYYSAW. At 29–374 the chain is on the lumenal side; that stretch reads KLHLLQWEDS…RVITDLSSGI (346 aa). 2 N-linked (GlcNAc...) asparagine glycosylation sites follow: Asn-79 and Asn-170. An intrachain disulfide couples Cys-159 to Cys-313.

This sequence belongs to the glycosyltransferase 29 family. Found in all tissues tested. High expression found in brain, liver, kidney, colon, heart and spleen.

Its subcellular location is the membrane. It localises to the golgi apparatus. The protein localises to the golgi stack membrane. The enzyme catalyses a beta-D-galactosyl-(1-&gt;4)-N-acetyl-beta-D-glucosaminyl derivative + CMP-N-acetyl-beta-neuraminate = an N-acetyl-alpha-neuraminyl-(2-&gt;3)-beta-D-galactosyl-(1-&gt;4)-N-acetyl-beta-D-glucosaminyl derivative + CMP + H(+). It participates in protein modification; protein glycosylation. Its function is as follows. Catalyzes the formation of the NeuAc-alpha-2,3-Gal-beta-1,4-GlcNAc-, NeuAc-alpha-2,3-Gal-beta-1,3-GlcNAc- and NeuAc-alpha-2,3-Gal-beta-1,3-GalNAc- sequences found in terminal carbohydrate groups of glycoproteins and glycolipids. The highest activity is toward Gal-beta-1,3-GlcNAc and the lowest toward Gal-beta-1,3-GalNAc. In Mus musculus (Mouse), this protein is CMP-N-acetylneuraminate-beta-1,4-galactoside alpha-2,3-sialyltransferase (St3gal3).